Consider the following 324-residue polypeptide: MLNTLLTHLINPLAYIVPVLLAVAFLTLLERKVLGYMQLRKGPNIVGPYGLLQPIADGVKLFIKEPIRPSTASPTLFLVTPMLALTLAMTLWAPMPMPHPIIDLNLGVLFILALSSLAVYSILGSGWASNSKYALIGALRAVAQTISYEVSLGLILRSIIIFWGGYTVQTFNTTQEALWLLLPACPLAAMWYISTLAETNRAPFDLTEGESELAPGFNVEYAGGPFALLFLAEYANILLMNTLSAILFLGASHMPAIPELTTINLMTKAALLSVVFLWVRASYPRFRYDQLMHLVWKNFLPLTLALVLWHTALPIAFAGLPPQL.

Transmembrane regions (helical) follow at residues 9-29, 76-96, 106-126, 146-166, 177-197, 228-248, 259-279, and 299-319; these read LINP…LTLL, LFLV…APMP, LGVL…LGSG, ISYE…WGGY, ALWL…STLA, LLFL…AILF, ELTT…FLWV, and FLPL…AFAG.

This sequence belongs to the complex I subunit 1 family.

The protein localises to the mitochondrion inner membrane. The catalysed reaction is a ubiquinone + NADH + 5 H(+)(in) = a ubiquinol + NAD(+) + 4 H(+)(out). Core subunit of the mitochondrial membrane respiratory chain NADH dehydrogenase (Complex I) that is believed to belong to the minimal assembly required for catalysis. Complex I functions in the transfer of electrons from NADH to the respiratory chain. The immediate electron acceptor for the enzyme is believed to be ubiquinone. The polypeptide is NADH-ubiquinone oxidoreductase chain 1 (MT-ND1) (Formosania lacustris (Oriental stream loach)).